Consider the following 176-residue polypeptide: Protein MAL2 (176 aa).

The Cytoplasmic segment spans residues 1–34; it reads MSAGGAPVPPPPNPAMSFPAPRVTLPAGPDILRT. Positions 31-175 constitute an MARVEL domain; the sequence is ILRTYSGAFV…SLGLALRRWR (145 aa). A helical membrane pass occupies residues 35–55; it reads YSGAFVCLEIVFGGLVWILVA. Over 56–66 the chain is Lumenal; the sequence is SSNVPLPLLQG. A helical membrane pass occupies residues 67–87; it reads WVMFVSVTAFVCSLLFLGVFL. Residues 88–102 are Cytoplasmic-facing; the sequence is SGVVTQINANWNFLD. Residues 103–123 form a helical membrane-spanning segment; that stretch reads FAYHFTVFVFYFGAFLLEAAT. Over 124 to 149 the chain is Lumenal; it reads TSLHDLRCNRTMTVQPLLSDNQYNIN. The N-linked (GlcNAc...) asparagine glycan is linked to asparagine 132. Residues 150–170 form a helical membrane-spanning segment; that stretch reads VAATIFAFVTTACYGCSLGLA. Residues 171–176 are Cytoplasmic-facing; sequence LRRWRP.

The protein belongs to the MAL family. Interacts with TPD52L2.

The protein localises to the cell membrane. The protein resides in the apical cell membrane. Its function is as follows. Member of the machinery of polarized transport. Required for the indirect transcytotic route at the step of the egress of the transcytosing cargo from perinuclear endosomes in order for it to travel to the apical surface via a raft-dependent pathway. In Bos taurus (Bovine), this protein is Protein MAL2 (MAL2).